The sequence spans 582 residues: ATP-dependent lipid A-core flippase (582 aa).

5 helical membrane passes run 25–45 (AGLIVAAIALILNAASDTFML), 69–89 (LAVIGLMVVRGVTGFVSSYCI), 137–159 (ASSSSALVTVVREGASIIGLFIM), 253–273 (PIIQLIASFALALVLYAASFP), and 275–295 (VMETLTAGTITVVFSAMIALM). An ABC transmembrane type-1 domain is found at 28 to 310 (IVAAIALILN…LTNVNTQFQR (283 aa)). The 237-residue stretch at 342–578 (IEFRHVTFYY…QGVYAQLNRM (237 aa)) folds into the ABC transporter domain. Residue 376–383 (GRSGSGKS) coordinates ATP.

The protein belongs to the ABC transporter superfamily. Lipid exporter (TC 3.A.1.106) family. In terms of assembly, homodimer.

Its subcellular location is the cell inner membrane. The catalysed reaction is ATP + H2O + lipid A-core oligosaccharideSide 1 = ADP + phosphate + lipid A-core oligosaccharideSide 2.. In terms of biological role, involved in lipopolysaccharide (LPS) biosynthesis. Translocates lipid A-core from the inner to the outer leaflet of the inner membrane. Transmembrane domains (TMD) form a pore in the inner membrane and the ATP-binding domain (NBD) is responsible for energy generation. This is ATP-dependent lipid A-core flippase from Yersinia pestis bv. Antiqua (strain Antiqua).